Here is an 843-residue protein sequence, read N- to C-terminus: Speckle targeted PIP5K1A-regulated poly(A) polymerase (843 aa).

Residues 25–55 (FRCLLCGVNIPNRPSLTDHLSGRRHVRLHEE) form a Matrin-type zinc finger. The 73-residue stretch at 54–126 (EERDKRNQQQ…ALEEPQIKLS (73 aa)) folds into the RRM domain. Over residues 134-146 (PREKKEFQRKKGG) the composition is skewed to basic residues. Residues 134–157 (PREKKEFQRKKGGSPRTLQPPDPE) are disordered. Serine 215 lines the ATP pocket. Mg(2+) is bound by residues aspartate 226 and aspartate 228. Residues aspartate 226 and aspartate 228 each contribute to the UTP site. Residues 241 to 255 (VEGKAEKEIQNREES) show a composition bias toward basic and acidic residues. The interval 241-292 (VEGKAEKEIQNREESSTDMEVSMEDPETERKEEEMEIGNSKNDEDEDVTPGL) is disordered. Position 354 (asparagine 354) interacts with ATP. UTP-binding residues include asparagine 354, arginine 376, tyrosine 398, and histidine 516. A PAP-associated domain is found at 456 to 516 (SLSSLLSEFF…NIQDPFELSH (61 aa)). The segment at 564–837 (PPTERECVGR…YLPRMVAQIQ (274 aa)) is KA1; binds the bulging loops of U6 snRNA but is dispensable for terminal uridylyltransferase activity. The segment at 653–691 (QNNTKEASKQKSIFKTEEGMTESARRKREMTEPCMSDMT) is disordered. Basic and acidic residues predominate over residues 658 to 670 (EASKQKSIFKTEE).

This sequence belongs to the DNA polymerase type-B-like family. As to quaternary structure, associates with the cleavage and polyadenylation specificity factor (CPSF) complex. Mg(2+) is required as a cofactor. The cofactor is Mn(2+).

The protein localises to the nucleus. It is found in the nucleolus. It localises to the nucleus speckle. The catalysed reaction is RNA(n) + UTP = RNA(n)-3'-uridine ribonucleotide + diphosphate. It catalyses the reaction RNA(n) + ATP = RNA(n)-3'-adenine ribonucleotide + diphosphate. Poly(A) polymerase that creates the 3'-poly(A) tail of specific pre-mRNAs. In addition to polyadenylation, it is also required for the 3'-end cleavage of pre-mRNAs: binds to the 3'UTR of targeted pre-mRNAs and promotes the recruitment and assembly of the CPSF complex on the 3'UTR of pre-mRNAs. In addition to adenylyltransferase activity, also has uridylyltransferase activity. However, the ATP ratio is higher than UTP in cells, suggesting that it functions primarily as a poly(A) polymerase. This is Speckle targeted PIP5K1A-regulated poly(A) polymerase (tut1) from Xenopus tropicalis (Western clawed frog).